The chain runs to 145 residues: Maximins 3/H3 type 2 (145 aa).

The signal sequence occupies residues 1-18 (MNFKYIVAVSFLIASAYA). 2 consecutive propeptides follow at residues 19-43 (RSVQ…LREI) and 74-124 (RTAE…KEKR). Residue Ile144 is modified to Isoleucine amide.

It belongs to the bombinin family. Expressed by the skin glands.

It localises to the secreted. Its function is as follows. Maximin-3 shows antibacterial activity against both Gram-positive and Gram-negative bacteria. It also shows antimicrobial activity against the fungus C.albicans, but not against A.flavus nor P.uticale. It has little hemolytic activity. It possess a significant cytotoxicity against tumor cell lines. It possess a significant anti-HIV activity. It shows high spermicidal activity. In terms of biological role, maximin-H3 shows antibacterial activity against both Gram-positive and Gram-negative bacteria. It also shows antimicrobial activity against the fungus C.albicans. Shows strong hemolytic activity. The protein is Maximins 3/H3 type 2 of Bombina maxima (Giant fire-bellied toad).